The sequence spans 146 residues: Anti-sigma F factor (146 aa).

Belongs to the anti-sigma-factor family.

It catalyses the reaction L-seryl-[protein] + ATP = O-phospho-L-seryl-[protein] + ADP + H(+). The catalysed reaction is L-threonyl-[protein] + ATP = O-phospho-L-threonyl-[protein] + ADP + H(+). Its function is as follows. Binds to sigma F and blocks its ability to form an RNA polymerase holoenzyme (E-sigma F). Phosphorylates SpoIIAA on a serine residue. This phosphorylation may enable SpoIIAA to act as an anti-anti-sigma factor that counteracts SpoIIAB and thus releases sigma F from inhibition. This Anoxybacillus flavithermus (strain DSM 21510 / WK1) protein is Anti-sigma F factor.